A 212-amino-acid chain; its full sequence is NAD(P)H-hydrate epimerase (212 aa).

Positions 11–212 constitute a YjeF N-terminal domain; that stretch reads MRHYDSYTIN…ANDMGTYAVD (202 aa). 60–64 serves as a coordination point for (6S)-NADPHX; it reads NNGGD. Residues asparagine 61 and aspartate 123 each coordinate K(+). (6S)-NADPHX contacts are provided by residues 127-133, tyrosine 138, and aspartate 156; that span reads GIGIDRA. Position 159 (serine 159) interacts with K(+).

This sequence belongs to the NnrE/AIBP family. Requires K(+) as cofactor.

The enzyme catalyses (6R)-NADHX = (6S)-NADHX. It catalyses the reaction (6R)-NADPHX = (6S)-NADPHX. Functionally, catalyzes the epimerization of the S- and R-forms of NAD(P)HX, a damaged form of NAD(P)H that is a result of enzymatic or heat-dependent hydration. This is a prerequisite for the S-specific NAD(P)H-hydrate dehydratase to allow the repair of both epimers of NAD(P)HX. The sequence is that of NAD(P)H-hydrate epimerase from Limosilactobacillus reuteri (strain ATCC 55730 / SD2112) (Lactobacillus reuteri).